A 458-amino-acid polypeptide reads, in one-letter code: MSITKEFDTIAAISTPLGEGAIGIVRISGTDALKIASKIYRGKDLSAIQSHTLNYGHIVDPDKNEILDEVMLGVMLAPKTFTREDVIEINTHGGIAVTNEILQLILRHGARMAEPGEFTKRAFLNGRVDLTQAEAVMDLIRAKTDKAMDIAVKQLDGSLKTLINNTRQEILNTLAQVEVNIDYPEYDDVEEMTTTLMREKTQEFQALMENLLRTARRGKILREGLSTAIIGRPNVGKSSLLNNLLREEKAIVTDIEGTTRDVIEEYVNIKGVPLKLVDTAGIRDTDDIVEKIGVERSKKALEEADLVLLVLNSSEPLTLQDRSLLELSKESNRIVLLNKTDLPQKIEVNELPKNVIPISVLENENIDKIEERINDIFFDNAGMVEHDATYLSNARHISLIEKAVDSLKAVNEGLELGMPVDLLQVDMTRTWEILGEITGDAAPDELITQLFSQFCLGK.

3 residues coordinate (6S)-5-formyl-5,6,7,8-tetrahydrofolate: R26, E88, and R127. The TrmE-type G domain occupies 224-378 (GLSTAIIGRP…IEERINDIFF (155 aa)). N234 is a binding site for K(+). GTP is bound by residues 234 to 239 (NVGKSS), 253 to 259 (TDIEGTT), and 278 to 281 (DTAG). S238 contributes to the Mg(2+) binding site. Positions 253, 255, and 258 each coordinate K(+). A Mg(2+)-binding site is contributed by T259. (6S)-5-formyl-5,6,7,8-tetrahydrofolate is bound at residue K458.

It belongs to the TRAFAC class TrmE-Era-EngA-EngB-Septin-like GTPase superfamily. TrmE GTPase family. Homodimer. Heterotetramer of two MnmE and two MnmG subunits. K(+) serves as cofactor.

It is found in the cytoplasm. Exhibits a very high intrinsic GTPase hydrolysis rate. Involved in the addition of a carboxymethylaminomethyl (cmnm) group at the wobble position (U34) of certain tRNAs, forming tRNA-cmnm(5)s(2)U34. The chain is tRNA modification GTPase MnmE from Streptococcus agalactiae serotype Ia (strain ATCC 27591 / A909 / CDC SS700).